The following is a 277-amino-acid chain: tRNA uridine(34) hydroxylase (277 aa).

The Rhodanese domain maps to 126 to 221 (SSPDVHVIDT…YLETMRGDDS (96 aa)). The active-site Cysteine persulfide intermediate is the Cys-181.

The protein belongs to the TrhO family.

It carries out the reaction uridine(34) in tRNA + AH2 + O2 = 5-hydroxyuridine(34) in tRNA + A + H2O. Its function is as follows. Catalyzes oxygen-dependent 5-hydroxyuridine (ho5U) modification at position 34 in tRNAs. This is tRNA uridine(34) hydroxylase from Anaplasma marginale (strain St. Maries).